The sequence spans 43 residues: Photosystem I reaction center subunit IX (43 aa).

A helical transmembrane segment spans residues 7-27 (YLSTAPVLSTIWFGSLAGLLI).

Belongs to the PsaJ family.

It localises to the plastid. The protein resides in the chloroplast thylakoid membrane. In terms of biological role, may help in the organization of the PsaE and PsaF subunits. This Vitis vinifera (Grape) protein is Photosystem I reaction center subunit IX.